The primary structure comprises 100 residues: NADH-quinone oxidoreductase subunit K (100 aa).

Helical transmembrane passes span 4-24, 28-48, and 60-80; these read LSHG…SLVM, ILFM…ALVV, and IMYI…LALL.

Belongs to the complex I subunit 4L family. NDH-1 is composed of 13 different subunits. Subunits NuoA, H, J, K, L, M, N constitute the membrane sector of the complex.

The protein localises to the cell membrane. The enzyme catalyses a quinone + NADH + 5 H(+)(in) = a quinol + NAD(+) + 4 H(+)(out). Functionally, NDH-1 shuttles electrons from NADH, via FMN and iron-sulfur (Fe-S) centers, to quinones in the respiratory chain. The immediate electron acceptor for the enzyme in this species is believed to be ubiquinone. Couples the redox reaction to proton translocation (for every two electrons transferred, four hydrogen ions are translocated across the cytoplasmic membrane), and thus conserves the redox energy in a proton gradient. This chain is NADH-quinone oxidoreductase subunit K, found in Buchnera aphidicola subsp. Baizongia pistaciae (strain Bp).